Consider the following 194-residue polypeptide: MKKKYKIDTNIFSKELLGFWLYLMSDCIIFCTLFSVYFILVDNVAQGPSGHNIFQNNLIIIETFLLLFSSFSCNLVLFEMKNKNLYMVFLWLGITFLLGLLFVFLELFEFFHLINLGFGPTRSGFLSSFFVLIATHGIHVISGLIWIIVMIKYVYTFNITNLIYYRMLCLNLFWHFLDIVWVFIFSFVYLFGMV.

The Cytoplasmic segment spans residues Met-1 to Gly-18. A helical transmembrane segment spans residues Phe-19–Val-41. The Extracellular segment spans residues Asp-42 to Gln-55. Residues Asn-56–Phe-78 traverse the membrane as a helical segment. Topologically, residues Glu-79–Asn-84 are cytoplasmic. Residues Leu-85–Leu-107 form a helical membrane-spanning segment. The Extracellular portion of the chain corresponds to Phe-108 to Leu-126. Residues Ser-127–Val-149 traverse the membrane as a helical segment. The Cytoplasmic portion of the chain corresponds to Met-150 to Cys-169. The chain crosses the membrane as a helical span at residues Leu-170 to Gly-192. At Met-193 to Val-194 the chain is on the extracellular side.

The protein belongs to the cytochrome c oxidase subunit 3 family. In terms of assembly, heterooctamer of two A chains, two B chains, two C chains and two D chains.

Its subcellular location is the cell membrane. Its function is as follows. Cytochrome bo(3) ubiquinol terminal oxidase is the component of the aerobic respiratory chain of E.coli that predominates when cells are grown at high aeration. Has proton pump activity across the membrane in addition to electron transfer, pumping 2 protons/electron. The protein is Cytochrome bo(3) ubiquinol oxidase subunit 3 (cyoC) of Buchnera aphidicola subsp. Baizongia pistaciae (strain Bp).